The chain runs to 389 residues: Galactose-1-phosphate uridylyltransferase (389 aa).

The protein belongs to the galactose-1-phosphate uridylyltransferase type 2 family.

It is found in the cytoplasm. It catalyses the reaction alpha-D-galactose 1-phosphate + UDP-alpha-D-glucose = alpha-D-glucose 1-phosphate + UDP-alpha-D-galactose. Its pathway is carbohydrate metabolism; galactose metabolism. The sequence is that of Galactose-1-phosphate uridylyltransferase (galT) from Butyrivibrio fibrisolvens.